The primary structure comprises 514 residues: Cilia- and flagella-associated protein 53 (514 aa).

The stretch at 207–429 (EDRLAKERRE…ERINEGLKEL (223 aa)) forms a coiled coil.

Belongs to the CFAP53 family. As to quaternary structure, microtubule inner protein component of sperm flagellar doublet microtubules. Interacts with PIERCE1 and PIERCE2; the interactions link outer dynein arms docking complex (ODA-DC) to the internal microtubule inner proteins (MIP) in cilium axoneme. Interacts with CCDC38. Interacts with CCDC42 and IFT88. Interacts with centriolar satellite proteins PIBF1/CEP90 and PCM1. Interacts with dyneins DNAIC1, DNAIC2 AND DNAH11 and with ODA-DC component ODAD4/TTC25. Expressed in trachea multiciliated cells.

The protein localises to the cytoplasm. It localises to the cytoskeleton. The protein resides in the cilium axoneme. It is found in the flagellum axoneme. Its subcellular location is the microtubule organizing center. The protein localises to the centrosome. It localises to the centriolar satellite. The protein resides in the spindle pole. Its function is as follows. Microtubule inner protein (MIP) part of the dynein-decorated doublet microtubules (DMTs) in cilia axoneme, which is required for motile cilia beating. Regulates motility patterns of both 9+0 and 9+2 motile cilia through differential localization and recruitment of axonemal dynein components. Required for centriolar satellite integrity and non-motile cilium assembly. Required for motile cilium formation. Through its role in beating of primary cilia, involved in the establishment of organ laterality during embryogenesis. Required for sperm flagellum biogenesis and is essential for male fertility. The chain is Cilia- and flagella-associated protein 53 (CFAP53) from Bos taurus (Bovine).